Here is a 154-residue protein sequence, read N- to C-terminus: 17.0 kDa class II heat shock protein (154 aa).

In terms of domain architecture, sHSP spans 39 to 154; it reads DARAMAATPA…KPKTIEIKVA (116 aa).

It belongs to the small heat shock protein (HSP20) family.

It localises to the cytoplasm. The protein is 17.0 kDa class II heat shock protein (HSP18) of Zea mays (Maize).